The primary structure comprises 215 residues: Cytochrome b6 (215 aa).

A helical membrane pass occupies residues Ile32–Phe52. A heme c-binding site is contributed by Cys35. The heme b site is built by His86 and His100. Helical transmembrane passes span Ala90 to Phe110, Leu116 to Tyr136, and Leu186 to Ile206. Residues His187 and His202 each contribute to the heme b site.

Belongs to the cytochrome b family. PetB subfamily. The 4 large subunits of the cytochrome b6-f complex are cytochrome b6, subunit IV (17 kDa polypeptide, PetD), cytochrome f and the Rieske protein, while the 4 small subunits are PetG, PetL, PetM and PetN. The complex functions as a dimer. Heme b serves as cofactor. It depends on heme c as a cofactor.

It is found in the plastid. It localises to the chloroplast thylakoid membrane. In terms of biological role, component of the cytochrome b6-f complex, which mediates electron transfer between photosystem II (PSII) and photosystem I (PSI), cyclic electron flow around PSI, and state transitions. The chain is Cytochrome b6 from Marchantia polymorpha (Common liverwort).